Consider the following 211-residue polypeptide: UPF0056 membrane protein BUsg_257 (211 aa).

The next 6 membrane-spanning stretches (helical) occupy residues 14-34 (FFVS…FTTM), 54-74 (AFII…AFGI), 76-96 (INSF…SMIS), 116-136 (VVPL…TIVW), 144-164 (SDFL…WLCF), and 185-205 (IMGL…IKSI).

This sequence belongs to the UPF0056 (MarC) family.

It localises to the cell membrane. This is UPF0056 membrane protein BUsg_257 from Buchnera aphidicola subsp. Schizaphis graminum (strain Sg).